The sequence spans 499 residues: Endoglucanase (499 aa).

The N-terminal stretch at 1 to 29 (MKRSISIFITCLLIAVLTMGGLLPSPASA) is a signal peptide. Residues His-65, 69 to 70 (WY), Tyr-96, and His-131 contribute to the substrate site. Glu-169 (proton donor) is an active-site residue. Tyr-231 lines the substrate pocket. Glu-257 serves as the catalytic Nucleophile. Residues 263–264 (AS), Trp-291, and 296–298 (KQE) contribute to the substrate site. Basic and acidic residues predominate over residues 330-340 (RGTKDSTKDVP). Residues 330–353 (RGTKDSTKDVPETPAQDNPTQEKG) form a disordered region. A CBM3 domain is found at 350–499 (QEKGVSVQYK…GKLIWGTEPN (150 aa)).

The protein belongs to the glycosyl hydrolase 5 (cellulase A) family.

The enzyme catalyses Endohydrolysis of (1-&gt;4)-beta-D-glucosidic linkages in cellulose, lichenin and cereal beta-D-glucans.. The polypeptide is Endoglucanase (bglC) (Bacillus subtilis).